The following is a 137-amino-acid chain: Large ribosomal subunit protein uL13 (137 aa).

The protein belongs to the universal ribosomal protein uL13 family. Part of the 50S ribosomal subunit.

Its function is as follows. This protein is one of the early assembly proteins of the 50S ribosomal subunit, although it is not seen to bind rRNA by itself. It is important during the early stages of 50S assembly. The polypeptide is Large ribosomal subunit protein uL13 (Methanocaldococcus jannaschii (strain ATCC 43067 / DSM 2661 / JAL-1 / JCM 10045 / NBRC 100440) (Methanococcus jannaschii)).